The sequence spans 246 residues: NH(3)-dependent NAD(+) synthetase (246 aa).

29–36 (GLSGGIDS) contacts ATP. D35 provides a ligand contact to Mg(2+). R110 serves as a coordination point for deamido-NAD(+). T130 contributes to the ATP binding site. Position 135 (E135) interacts with Mg(2+). 2 residues coordinate ATP: K159 and S181.

It belongs to the NAD synthetase family. As to quaternary structure, homodimer.

The catalysed reaction is deamido-NAD(+) + NH4(+) + ATP = AMP + diphosphate + NAD(+) + H(+). The protein operates within cofactor biosynthesis; NAD(+) biosynthesis; NAD(+) from deamido-NAD(+) (ammonia route): step 1/1. Functionally, catalyzes the ATP-dependent amidation of deamido-NAD to form NAD. Uses ammonia as a nitrogen source. In Campylobacter jejuni subsp. doylei (strain ATCC BAA-1458 / RM4099 / 269.97), this protein is NH(3)-dependent NAD(+) synthetase.